Reading from the N-terminus, the 794-residue chain is ATP-dependent RNA helicase SUPV3L1, mitochondrial (794 aa).

The N-terminal 30 residues, 1–30 (MRRCAWPLLRLSSRVGLALRHGGAVRLRQA), are a transit peptide targeting the mitochondrion. The Helicase ATP-binding domain maps to 182-322 (EARAIQRKII…AIDLVTELMY (141 aa)). Residue 195-202 (GPTNSGKT) participates in ATP binding. Residues 341–506 (VLDYALESLD…GLHPTPEQIE (166 aa)) form the Helicase C-terminal domain. 2 disordered regions span residues 678-741 (EVMS…HGRG) and 764-794 (EWQD…KKKK). Basic and acidic residues predominate over residues 689 to 704 (TKRDARTVSDHRDAKS).

Belongs to the helicase family. Mg(2+) is required as a cofactor. It depends on Mn(2+) as a cofactor.

It is found in the nucleus. The protein resides in the mitochondrion matrix. The protein localises to the mitochondrion nucleoid. It catalyses the reaction ATP + H2O = ADP + phosphate + H(+). Functionally, major helicase player in mitochondrial RNA metabolism. Component of the mitochondrial degradosome (mtEXO) complex, that degrades 3' overhang double-stranded RNA with a 3'-to-5' directionality in an ATP-dependent manner. ATPase and ATP-dependent multisubstrate helicase, able to unwind double-stranded (ds) DNA and RNA, and RNA/DNA heteroduplexes in the 5'-to-3' direction. Plays a role in the RNA surveillance system in mitochondria; regulates the stability of mature mRNAs, the removal of aberrantly formed mRNAs and the rapid degradation of non coding processing intermediates. Also implicated in recombination and chromatin maintenance pathways. May protect cells from apoptosis. Associates with mitochondrial DNA. The polypeptide is ATP-dependent RNA helicase SUPV3L1, mitochondrial (SUPV3L1) (Gallus gallus (Chicken)).